The primary structure comprises 291 residues: Nucleotide-binding protein lin2617 (291 aa).

G13–T20 contributes to the ATP binding site. Residue D63–G66 participates in GTP binding.

This sequence belongs to the RapZ-like family.

In terms of biological role, displays ATPase and GTPase activities. This is Nucleotide-binding protein lin2617 from Listeria innocua serovar 6a (strain ATCC BAA-680 / CLIP 11262).